A 240-amino-acid polypeptide reads, in one-letter code: Leucyl/phenylalanyl-tRNA--protein transferase (240 aa).

This sequence belongs to the L/F-transferase family.

It is found in the cytoplasm. The catalysed reaction is N-terminal L-lysyl-[protein] + L-leucyl-tRNA(Leu) = N-terminal L-leucyl-L-lysyl-[protein] + tRNA(Leu) + H(+). The enzyme catalyses N-terminal L-arginyl-[protein] + L-leucyl-tRNA(Leu) = N-terminal L-leucyl-L-arginyl-[protein] + tRNA(Leu) + H(+). It catalyses the reaction L-phenylalanyl-tRNA(Phe) + an N-terminal L-alpha-aminoacyl-[protein] = an N-terminal L-phenylalanyl-L-alpha-aminoacyl-[protein] + tRNA(Phe). Its function is as follows. Functions in the N-end rule pathway of protein degradation where it conjugates Leu, Phe and, less efficiently, Met from aminoacyl-tRNAs to the N-termini of proteins containing an N-terminal arginine or lysine. The protein is Leucyl/phenylalanyl-tRNA--protein transferase of Maridesulfovibrio salexigens (strain ATCC 14822 / DSM 2638 / NCIMB 8403 / VKM B-1763) (Desulfovibrio salexigens).